The primary structure comprises 365 residues: Outer capsid protein sigma-3 (365 aa).

A CCHC-type zinc finger spans residues 51-73 (CMHCLGVVGSLQRKLKHLPHHKC).

It belongs to the orthoreovirus sigma-3 protein family. Heterohexamer of three sigma-3 and three Mu-1 proteins. The RNA-binding form is probably a homodimer. In terms of processing, cleaved during virus the endosomal proteolytic disassembly of the outer capsid.

It is found in the virion. The protein resides in the host cytoplasm. Its subcellular location is the host nucleus. Functionally, stimulates translation by blocking the activation of the dsRNA-dependent protein kinase EIF2AK2/PKR, thereby inhibiting the host interferon response. Sigma3 prevents the activation of EIF2AK2 by competing with the kinase for dsRNA-binding. In terms of biological role, the viral outer shell polypeptides, of which sigma-3 is one, impose structural constraints that prevent elongation of nascent transcripts by the RNA-dependent RNA polymerase lambda-3. The protein is Outer capsid protein sigma-3 (S4) of Mammalia (T2J).